Here is a 584-residue protein sequence, read N- to C-terminus: Protein disulfide-isomerase-like protein of the testis (584 aa).

An N-terminal signal peptide occupies residues 1–20 (MDLLWMPLLLVAACVSAVHS). Asn-58, Asn-128, Asn-160, and Asn-340 each carry an N-linked (GlcNAc...) asparagine glycan. The Thioredoxin domain maps to 388-451 (LVKQLVGKNF…IAKIDVTAND (64 aa)). Asn-540 carries an N-linked (GlcNAc...) asparagine glycan. The Prevents secretion from ER motif lies at 581–584 (KEEL).

The protein belongs to the protein disulfide isomerase family. In terms of assembly, homodimer. The homodimer is not disulfide-linked. Interacts with ERO1A and CLGN. N-glycosylated. In terms of tissue distribution, testis-specific.

Its subcellular location is the endoplasmic reticulum. In terms of biological role, probable redox-inactive chaperone involved in spermatogenesis. This is Protein disulfide-isomerase-like protein of the testis (PDILT) from Homo sapiens (Human).